Consider the following 294-residue polypeptide: ATP synthase gamma chain (294 aa).

This sequence belongs to the ATPase gamma chain family. F-type ATPases have 2 components, CF(1) - the catalytic core - and CF(0) - the membrane proton channel. CF(1) has five subunits: alpha(3), beta(3), gamma(1), delta(1), epsilon(1). CF(0) has three main subunits: a, b and c.

The protein resides in the cell inner membrane. Produces ATP from ADP in the presence of a proton gradient across the membrane. The gamma chain is believed to be important in regulating ATPase activity and the flow of protons through the CF(0) complex. The polypeptide is ATP synthase gamma chain (Parvibaculum lavamentivorans (strain DS-1 / DSM 13023 / NCIMB 13966)).